The sequence spans 88 residues: uncharacterized protein (88 aa).

A helical membrane pass occupies residues Ile-34 to Ile-54.

It localises to the membrane. This is an uncharacterized protein from Ureaplasma parvum serovar 3 (strain ATCC 700970).